The following is a 106-amino-acid chain: uncharacterized protein (106 aa).

The first 22 residues, methionine 1 to threonine 22, serve as a signal peptide directing secretion. Residues isoleucine 23–aspartate 46 form a disordered region.

This is an uncharacterized protein from Arabidopsis thaliana (Mouse-ear cress).